The primary structure comprises 700 residues: Beta-galactosidase BgaB (700 aa).

Substrate-binding residues include arginine 122 and asparagine 160. Glutamate 161 (proton donor) is an active-site residue. The Nucleophile role is filled by glutamate 320. Residues tryptophan 328 and 368 to 371 (EAFH) each bind substrate.

Belongs to the glycosyl hydrolase 42 family. Trimer. Tetramer. Post-translationally, the N-terminus is blocked.

The catalysed reaction is Hydrolysis of terminal non-reducing beta-D-galactose residues in beta-D-galactosides.. With respect to regulation, inhibited by high substrate concentrations (100 mg/ml). No effect on activity with various EDTA concentrations (0-1 mM). 20-fold higher activity when cells grown on TOS than when cells grown on galactose, glucose and lactose. In terms of biological role, involved in the hydrolysis of transgalactooligosaccharides (TOS). Highly active towards Gal(beta1-4)Gal and Gal(beta1-4)-Gal-containing oligosaccharides. Low activity towards Gal(beta1-3)Gal, lactose and Gal(beta1-3)GalOMe. No activity towards Gal(beta1-6)Gal, Gal(beta1-4)Man, Gal(alpha1-4)Gal, Gal(alpha1-3)Gal(beta1-4)Gal, lactulose, 3'fucosyllactose, lacto-N-fucopentaose I, lacto-N-fucopentaose II, cellobiose, maltose or sucrose. No transglycosylation activity is found at high substrate concentrations (100 mg/ml) and only low transglycosylation activity at lower substrate concentrations (10 mg/ml). In Bifidobacterium adolescentis (strain ATCC 15703 / DSM 20083 / NCTC 11814 / E194a), this protein is Beta-galactosidase BgaB (bgaB).